Reading from the N-terminus, the 147-residue chain is Probable cytidine deaminase (147 aa).

Positions glutamate 4–glutamate 130 constitute a CMP/dCMP-type deaminase domain. Residue asparagine 45–tyrosine 51 participates in substrate binding. Zn(2+) is bound at residue cysteine 56. Glutamate 58 acts as the Proton donor in catalysis. Zn(2+) is bound by residues cysteine 90 and cysteine 93.

The protein belongs to the cytidine and deoxycytidylate deaminase family. The cofactor is Zn(2+).

The enzyme catalyses cytidine + H2O + H(+) = uridine + NH4(+). It carries out the reaction 2'-deoxycytidine + H2O + H(+) = 2'-deoxyuridine + NH4(+). Functionally, this enzyme scavenges exogenous and endogenous cytidine and 2'-deoxycytidine for UMP synthesis. This chain is Probable cytidine deaminase (cda), found in Dictyostelium discoideum (Social amoeba).